The primary structure comprises 164 residues: Nucleotide-binding protein Emin_0136 (164 aa).

The protein belongs to the YajQ family.

In terms of biological role, nucleotide-binding protein. This chain is Nucleotide-binding protein Emin_0136, found in Elusimicrobium minutum (strain Pei191).